A 693-amino-acid chain; its full sequence is Elongation factor G (693 aa).

One can recognise a tr-type G domain in the interval E8 to L282. GTP contacts are provided by residues A17–T24, D81–H85, and N135–D138.

This sequence belongs to the TRAFAC class translation factor GTPase superfamily. Classic translation factor GTPase family. EF-G/EF-2 subfamily.

The protein resides in the cytoplasm. Its function is as follows. Catalyzes the GTP-dependent ribosomal translocation step during translation elongation. During this step, the ribosome changes from the pre-translocational (PRE) to the post-translocational (POST) state as the newly formed A-site-bound peptidyl-tRNA and P-site-bound deacylated tRNA move to the P and E sites, respectively. Catalyzes the coordinated movement of the two tRNA molecules, the mRNA and conformational changes in the ribosome. This chain is Elongation factor G, found in Streptococcus pneumoniae (strain P1031).